The following is a 398-amino-acid chain: Acetyl-CoA acetyltransferase (398 aa).

Ser-2 is modified (N-acetylserine). The active-site Acyl-thioester intermediate is Cys-91. 2 residues coordinate CoA: Tyr-186 and Lys-231. Position 186 (Tyr-186) interacts with K(+). Residues Ala-248, Ala-249, and Ala-251 each coordinate K(+). Ser-252 is a binding site for CoA. Val-350 is a K(+) binding site. Residues His-354 and Cys-384 each act as proton acceptor in the active site.

This sequence belongs to the thiolase-like superfamily. Thiolase family. In terms of assembly, homotetramer.

The protein resides in the cytoplasm. Its subcellular location is the cytosol. It catalyses the reaction 2 acetyl-CoA = acetoacetyl-CoA + CoA. Its pathway is metabolic intermediate biosynthesis; (R)-mevalonate biosynthesis; (R)-mevalonate from acetyl-CoA: step 1/3. In terms of biological role, acetyl-CoA acetyltransferase; part of the first module of ergosterol biosynthesis pathway that includes the early steps of the pathway, conserved across all eukaryotes, and which results in the formation of mevalonate from acetyl-coenzyme A (acetyl-CoA). ERG10 catalyzes the formation of acetoacetyl-CoA from acetyl-CoA. The first module starts with the action of the cytosolic acetyl-CoA acetyltransferase ERG10 that catalyzes the formation of acetoacetyl-CoA. The hydroxymethylglutaryl-CoA synthase ERG13 then condenses acetyl-CoA with acetoacetyl-CoA to form HMG-CoA. The rate-limiting step of the early module is the reduction to mevalonate by the 3-hydroxy-3-methylglutaryl-coenzyme A (HMG-CoA) reductases HMG1 and HMG2 which are derived from a single ancestral HMGR gene by gene duplication. This is Acetyl-CoA acetyltransferase from Saccharomyces cerevisiae (strain ATCC 204508 / S288c) (Baker's yeast).